A 361-amino-acid polypeptide reads, in one-letter code: Glyceraldehyde-3-phosphate dehydrogenase, glycosomal (361 aa).

Residues 13–14 (RI), D39, and R93 contribute to the NAD(+) site. D-glyceraldehyde 3-phosphate is bound by residues 166-168 (SCT), T198, 227-228 (TG), and R250. Residue C167 is the Nucleophile of the active site. Residue N336 participates in NAD(+) binding. The Microbody targeting signal signature appears at 359 to 361 (SKL).

This sequence belongs to the glyceraldehyde-3-phosphate dehydrogenase family. In terms of assembly, homotetramer.

The protein resides in the glycosome. It carries out the reaction D-glyceraldehyde 3-phosphate + phosphate + NAD(+) = (2R)-3-phospho-glyceroyl phosphate + NADH + H(+). Its pathway is carbohydrate degradation; glycolysis; pyruvate from D-glyceraldehyde 3-phosphate: step 1/5. This Crithidia fasciculata protein is Glyceraldehyde-3-phosphate dehydrogenase, glycosomal (GAPDG).